The chain runs to 1300 residues: Sal-like protein 3 (1300 aa).

Positions 1–11 (MSRRKQAKPQH) are enriched in basic residues. Disordered stretches follow at residues 1-51 (MSRR…EETS), 84-162 (EDAP…YGAP), 234-258 (QRPPPRPSLSPAAAPSAPGPAPSQL), and 277-352 (GSGP…GSLL). The segment at 51 to 73 (SVCEKCCAEFFKWADFLEHQRSC) adopts a C2H2-type 1; atypical zinc-finger fold. Over residues 87-100 (PAPPPEDFPEPSPA) the composition is skewed to pro residues. The residue at position 109 (serine 109) is a Phosphoserine. Residues 122–132 (GEARPVEKEAE) show a composition bias toward basic and acidic residues. Positions 145–157 (PRPPPAAPAPPTP) are enriched in pro residues. Low complexity-rich tracts occupy residues 277 to 319 (GSGP…AAPA) and 329 to 352 (PQSAASSQPQSASTPPALAPGSLL). 2 consecutive C2H2-type zinc fingers follow at residues 420 to 442 (HKCRFCAKVFGSDSALQIHLRSH) and 448 to 470 (FKCNICGNRFSTKGNLKVHFQRH). The disordered stretch occupies residues 523–633 (PTSVGLQLPP…VDGAPTSLGS (111 aa)). Residues 543–561 (SPSATPASRSPQRPSPASS) show a composition bias toward low complexity. Residues 577-586 (VSATAESPQS) are compositionally biased toward polar residues. 3 C2H2-type zinc fingers span residues 679 to 701 (NQCVICHRVLSCQSALKMHYRTH), 707 to 729 (FKCKICGRAFTTKGNLKTHFGVH), and 739 to 761 (HSCPICQKKFTNAVVLQQHIRMH). A disordered region spans residues 864–955 (SVENGSGESD…GSGGAPGRAG (92 aa)). The segment covering 889-910 (RSAGSPALSESSSSQALSPAPS) has biased composition (low complexity). Serine 919 carries the post-translational modification Phosphoserine. 4 consecutive C2H2-type zinc fingers follow at residues 977–999 (TVCGVCGKPFACKSALEIHYRSH), 1005–1027 (FVCALCRRGCSTMGNLKQHLLTH), 1113–1135 (HNCQSCGKTFSSASALQIHERTH), and 1141–1163 (FGCTICGRAFTTKGNLKVHMGTH). At serine 1177 the chain carries Phosphoserine. The segment at 1259 to 1279 (GMDKARTGSSPPIVSLDKASS) is disordered.

It belongs to the sal C2H2-type zinc-finger protein family. In terms of tissue distribution, widely expressed in adult with highest levels in heart. Expressed in fetal brain (in neurons of hippocampus, cortex, mediodorsal and ventrolateral thalamic nuclei, putamen, cerebellum and brainstem).

It localises to the nucleus. Probable transcription factor. The chain is Sal-like protein 3 (SALL3) from Homo sapiens (Human).